The primary structure comprises 211 residues: Imidazole glycerol phosphate synthase subunit HisH (211 aa).

The region spanning 4–211 (RVVILDYGSG…QLLANWVATL (208 aa)) is the Glutamine amidotransferase type-1 domain. The active-site Nucleophile is the Cys-82. Catalysis depends on residues His-192 and Glu-194.

As to quaternary structure, heterodimer of HisH and HisF.

The protein resides in the cytoplasm. It carries out the reaction 5-[(5-phospho-1-deoxy-D-ribulos-1-ylimino)methylamino]-1-(5-phospho-beta-D-ribosyl)imidazole-4-carboxamide + L-glutamine = D-erythro-1-(imidazol-4-yl)glycerol 3-phosphate + 5-amino-1-(5-phospho-beta-D-ribosyl)imidazole-4-carboxamide + L-glutamate + H(+). It catalyses the reaction L-glutamine + H2O = L-glutamate + NH4(+). Its pathway is amino-acid biosynthesis; L-histidine biosynthesis; L-histidine from 5-phospho-alpha-D-ribose 1-diphosphate: step 5/9. Its function is as follows. IGPS catalyzes the conversion of PRFAR and glutamine to IGP, AICAR and glutamate. The HisH subunit catalyzes the hydrolysis of glutamine to glutamate and ammonia as part of the synthesis of IGP and AICAR. The resulting ammonia molecule is channeled to the active site of HisF. The chain is Imidazole glycerol phosphate synthase subunit HisH from Thermobifida fusca (strain YX).